Reading from the N-terminus, the 263-residue chain is Ribosomal RNA small subunit methyltransferase A (263 aa).

6 residues coordinate S-adenosyl-L-methionine: N20, L22, G47, E68, D90, and N111.

It belongs to the class I-like SAM-binding methyltransferase superfamily. rRNA adenine N(6)-methyltransferase family. RsmA subfamily.

The protein localises to the cytoplasm. It carries out the reaction adenosine(1518)/adenosine(1519) in 16S rRNA + 4 S-adenosyl-L-methionine = N(6)-dimethyladenosine(1518)/N(6)-dimethyladenosine(1519) in 16S rRNA + 4 S-adenosyl-L-homocysteine + 4 H(+). In terms of biological role, specifically dimethylates two adjacent adenosines (A1518 and A1519) in the loop of a conserved hairpin near the 3'-end of 16S rRNA in the 30S particle. May play a critical role in biogenesis of 30S subunits. The chain is Ribosomal RNA small subunit methyltransferase A from Chlorobium chlorochromatii (strain CaD3).